The chain runs to 340 residues: Probable cyclic nucleotide phosphodiesterase PsycPRwf_0181 (340 aa).

The segment at 1-36 (MAPLPHSVSPRHTQVADNGRLSEPTDYHPPTEISTD) is disordered. Positions 47, 49, 128, 158, 237, 276, and 278 each coordinate Fe cation. Residues His49, Asp128, and 158 to 159 (NH) each bind AMP. Position 278 (His278) interacts with AMP.

This sequence belongs to the cyclic nucleotide phosphodiesterase class-III family. The cofactor is Fe(2+).

This is Probable cyclic nucleotide phosphodiesterase PsycPRwf_0181 from Psychrobacter sp. (strain PRwf-1).